Reading from the N-terminus, the 496-residue chain is Costunolide synthase (496 aa).

Residues 4–24 (FTIFSLVVASLVFFACWALVA) traverse the membrane as a helical; Signal-anchor for type II membrane protein segment. Residues asparagine 26, asparagine 168, asparagine 280, and asparagine 412 are each glycosylated (N-linked (GlcNAc...) asparagine). Cysteine 434 contributes to the heme binding site.

Belongs to the cytochrome P450 family. It depends on heme as a cofactor. Expressed in floral glandular trichomes.

It is found in the membrane. The enzyme catalyses germacra-1(10),4,11(13)-trien-12-oate + reduced [NADPH--hemoprotein reductase] + O2 = (+)-costunolide + oxidized [NADPH--hemoprotein reductase] + 2 H2O. It functions in the pathway secondary metabolite biosynthesis; terpenoid biosynthesis. Involved in the biosynthesis of germacrene-derived sesquiterpene lactones. Component of the parthenolide biosynthetic pathway; parthenolide and conjugates are promising anti-cancer drugs highly active against colon cancer cells. Hydroxylates germacrene A acid to 6-alpha-hydroxy-germacrene A acid, a precursor of sesquiterpene lactones that spontaneously undergoes a lactonization which yields costunolide. The sequence is that of Costunolide synthase from Tanacetum parthenium (Feverfew).